Here is a 310-residue protein sequence, read N- to C-terminus: Ribose-phosphate pyrophosphokinase (310 aa).

ATP is bound by residues 34–36 and 93–94; these read DGE and RQ. Residues His-127 and Asp-167 each contribute to the Mg(2+) site. Lys-190 is an active-site residue. Residues Arg-192, Asp-216, and 220 to 224 each bind D-ribose 5-phosphate; that span reads DSGGT.

The protein belongs to the ribose-phosphate pyrophosphokinase family. Class I subfamily. In terms of assembly, homohexamer. Mg(2+) serves as cofactor.

The protein resides in the cytoplasm. It catalyses the reaction D-ribose 5-phosphate + ATP = 5-phospho-alpha-D-ribose 1-diphosphate + AMP + H(+). It functions in the pathway metabolic intermediate biosynthesis; 5-phospho-alpha-D-ribose 1-diphosphate biosynthesis; 5-phospho-alpha-D-ribose 1-diphosphate from D-ribose 5-phosphate (route I): step 1/1. Its function is as follows. Involved in the biosynthesis of the central metabolite phospho-alpha-D-ribosyl-1-pyrophosphate (PRPP) via the transfer of pyrophosphoryl group from ATP to 1-hydroxyl of ribose-5-phosphate (Rib-5-P). This is Ribose-phosphate pyrophosphokinase from Maricaulis maris (strain MCS10) (Caulobacter maris).